The chain runs to 43 residues: Plasma membrane ATPase proteolipid 2 (43 aa).

A propeptide spanning residues 1–5 (MLMST) is cleaved from the precursor. A helical transmembrane segment spans residues 9–29 (GVILVFILVGLACIAIISTII). The Cytoplasmic segment spans residues 30–43 (YRKWQARQRGLQRF).

In terms of assembly, monomer and homodimer. Associated with the 100 kDa subunit of the plasma membrane H(+)-ATPase.

Its subcellular location is the cell membrane. The protein is Plasma membrane ATPase proteolipid 2 (PMP2) of Saccharomyces cerevisiae (strain ATCC 204508 / S288c) (Baker's yeast).